The primary structure comprises 312 residues: Glyoxylate/hydroxypyruvate reductase A (312 aa).

Residue Arg-227 is part of the active site. Catalysis depends on His-275, which acts as the Proton donor.

It belongs to the D-isomer specific 2-hydroxyacid dehydrogenase family. GhrA subfamily.

It localises to the cytoplasm. It carries out the reaction glycolate + NADP(+) = glyoxylate + NADPH + H(+). It catalyses the reaction (R)-glycerate + NAD(+) = 3-hydroxypyruvate + NADH + H(+). The enzyme catalyses (R)-glycerate + NADP(+) = 3-hydroxypyruvate + NADPH + H(+). Functionally, catalyzes the NADPH-dependent reduction of glyoxylate and hydroxypyruvate into glycolate and glycerate, respectively. The protein is Glyoxylate/hydroxypyruvate reductase A of Escherichia coli (strain ATCC 8739 / DSM 1576 / NBRC 3972 / NCIMB 8545 / WDCM 00012 / Crooks).